Reading from the N-terminus, the 81-residue chain is Translational regulator CsrA (81 aa).

This sequence belongs to the CsrA/RsmA family. Homodimer; the beta-strands of each monomer intercalate to form a hydrophobic core, while the alpha-helices form wings that extend away from the core.

It localises to the cytoplasm. A translational regulator that binds mRNA to regulate translation initiation and/or mRNA stability. Usually binds in the 5'-UTR at or near the Shine-Dalgarno sequence preventing ribosome-binding, thus repressing translation. Its main target seems to be the major flagellin gene, while its function is anatagonized by FliW. The polypeptide is Translational regulator CsrA (Borreliella burgdorferi (strain ATCC 35210 / DSM 4680 / CIP 102532 / B31) (Borrelia burgdorferi)).